The sequence spans 406 residues: Acetyltransferase sirH (406 aa).

6 consecutive transmembrane segments (helical) span residues 9–29 (IFIE…FALG), 32–52 (AHTF…CQSL), 63–83 (LLSN…WILL), 295–315 (VQLF…ALLC), 323–343 (SALF…HVIA), and 358–378 (FIGF…WVGS).

This sequence belongs to the wax synthase family.

The protein localises to the membrane. Its pathway is mycotoxin biosynthesis. In terms of biological role, acetyltransferase; part of the gene cluster that mediates the biosynthesis of sirodesmin PL, an epipolythiodioxopiperazine (ETP) characterized by a disulfide bridged cyclic dipeptide and that acts as a phytotoxin which is involved in the blackleg didease of canola. SirD catalyzes the O-prenylation of L-tyrosine (L-Tyr) in the presence of dimethylallyl diphosphate (DMAPP) to yield 4-O-dimethylallyl-L-Tyr, and therefore represents probably the first pathway-specific enzyme in the biosynthesis of sirodesmin PL. 4-O-dimethylallyl-L-Tyr, then undergoes condensation with L-Ser in a reaction catalyzed by the non-ribosomal peptide synthase sirP to form the diketopiperazine (DKP) backbone. Further bishydroxylation of the DKP performed by the cytochrome P450 monooxygenase sirC leads to the production of the intermediate phomamide. This step is essential to form the reactive thiol group required for toxicity of sirodesmin PL. The next steps of sirodesmin biosynthesis are not well understood yet, but some predictions could be made from intermediate compounds identification. Phomamide is converted into phomalizarine via oxidation, probably by sirT. Further oxidation, methylation (by sirM or sirN) and reduction steps convert phomalizarine to deacetyl sirodesmin. Finally, acetyltransferase sirH probably acetylates deacetyl sirodesmin to produce sirodesmin PL. The protein is Acetyltransferase sirH of Leptosphaeria maculans (Blackleg fungus).